We begin with the raw amino-acid sequence, 351 residues long: Cytoplasmic dynein 2 light intermediate chain 1 (351 aa).

The interval 303 to 335 (GTLKAVQDPARDPQYAESEVDEMRVQKDQELEH) is disordered. A compositionally biased stretch (basic and acidic residues) spans 323–335 (DEMRVQKDQELEH).

Belongs to the dynein light intermediate chain family. Light intermediate chain of the cytoplasmic dynein complex 2, a multisubunit complex composed at least of eleven different proteins. The cytoplasmic dynein 2 complex consists of two catalytic heavy chains (HCs) and a number of non-catalytic subunits presented by intermediate chains (ICs), light intermediate chains (LICs) and light chains (LCs). Among them, a heavy chain (DYNC2H1), two intermediate chains (DYNC2I2 and DYNC2I1), a light intermediate chain (DYNC2LI1), and a light chain (DYNLT2B) are unique to the dynein-2 complex, but a subset of light chains are also shared by dynein-1 and dynein-2 complexes. Dynein-2 complex is built around two copies of cytoplasmic dynein 2 heavy chain 1 (DYNC2H1). The C-terminal region forms the motor domain, which converts the energy from ATP hydrolysis into movement. Its N-terminal region forms the tail, an extended structure that binds the other subunits and holds the two heavy chains in a homodimer. Interacts with DYNC2H1 (via N-terminus); this interaction stabilizes the dynein-2 complex structure. In terms of tissue distribution, specifically expressed by ciliated cells in brain, lung, spleen, testis and kidney (at protein level). Enriched in the ependymal layer lining the lateral ventricles (at protein level).

It is found in the cytoplasm. The protein localises to the cell projection. It localises to the cilium. The protein resides in the cytoskeleton. Its subcellular location is the cilium basal body. It is found in the cilium axoneme. The protein localises to the microtubule organizing center. It localises to the centrosome. Acts as one of several non-catalytic accessory components of the cytoplasmic dynein 2 complex (dynein-2 complex), a motor protein complex that drives the movement of cargos along microtubules within cilia and flagella in concert with the intraflagellar transport (IFT) system, facilitating the assembly of these organelles. Involved in the regulation of ciliary length. The sequence is that of Cytoplasmic dynein 2 light intermediate chain 1 (Dync2li1) from Mus musculus (Mouse).